A 113-amino-acid chain; its full sequence is Ribulose bisphosphate carboxylase small subunit (113 aa).

The protein belongs to the RuBisCO small chain family. In terms of assembly, heterohexadecamer of 8 large and 8 small subunits. Forms a CsoS2-CsoS1-RuBisCO complex.

Its subcellular location is the carboxysome. RuBisCO catalyzes two reactions: the carboxylation of D-ribulose 1,5-bisphosphate, the primary event in carbon dioxide fixation, as well as the oxidative fragmentation of the pentose substrate in the photorespiration process. Both reactions occur simultaneously and in competition at the same active site. Although the small subunit is not catalytic it is essential for maximal activity. There are estimated to be 152 RuBisCO holoenzymes per carboxysome. This Prochlorococcus marinus subsp. pastoris (strain CCMP1986 / NIES-2087 / MED4) protein is Ribulose bisphosphate carboxylase small subunit.